A 91-amino-acid polypeptide reads, in one-letter code: UPF0512 protein F (91 aa).

The protein belongs to the UPF0512 family.

The chain is UPF0512 protein F from Dictyostelium discoideum (Social amoeba).